Here is a 466-residue protein sequence, read N- to C-terminus: Coagulation factor VII (466 aa).

Positions 1-20 (MVSQALRLLCLLLGLQGCLA) are cleaved as a signal peptide. Residues 21 to 60 (AGGVAEASGGETRDMPWKPGPHRVFITQEEAHGVLHRRRR) constitute a propeptide that is removed on maturation. One can recognise a Gla domain in the interval 61 to 105 (ANAFLEELRPGSLERECKEEQCSFEEAREIFKDLERTKLFWISYS). 10 positions are modified to 4-carboxyglutamate: glutamate 66, glutamate 67, glutamate 74, glutamate 76, glutamate 79, glutamate 80, glutamate 85, glutamate 86, glutamate 89, and glutamate 95. Cysteine 77 and cysteine 82 are disulfide-bonded. Positions 106-142 (DGDQCASSPCQNGGSCKDQLQSYICFCLPAFEGRNCE) constitute an EGF-like 1; calcium-binding domain. 10 cysteine pairs are disulfide-bonded: cysteine 110-cysteine 121, cysteine 115-cysteine 130, cysteine 132-cysteine 141, cysteine 151-cysteine 162, cysteine 158-cysteine 172, cysteine 174-cysteine 187, cysteine 195-cysteine 322, cysteine 219-cysteine 224, cysteine 238-cysteine 254, and cysteine 370-cysteine 389. Serine 112 carries an O-linked (Glc...) serine; alternate glycan. O-linked (Xyl...) serine; alternate glycosylation is present at serine 112. The O-linked (Fuc) serine glycan is linked to serine 120. Aspartate 123 carries the (3R)-3-hydroxyaspartate modification. An EGF-like 2 domain is found at 147–188 (DQLICVNENGGCEQYCSDHTGTKRSCRCHEGYSLLADGVSCT). Asparagine 205 carries an N-linked (GlcNAc...) asparagine glycan. The Peptidase S1 domain maps to 213–452 (IVGGKVCPKG…YIEWLQKLMR (240 aa)). Catalysis depends on charge relay system residues histidine 253 and aspartate 302. An N-linked (GlcNAc...) asparagine glycan is attached at asparagine 382. Aspartate 398 lines the substrate pocket. The cysteines at positions 400 and 428 are disulfide-linked. Serine 404 functions as the Charge relay system in the catalytic mechanism.

This sequence belongs to the peptidase S1 family. In terms of assembly, heterodimer of a light chain and a heavy chain linked by a disulfide bond. In terms of processing, the vitamin K-dependent, enzymatic carboxylation of some glutamate residues allows the modified protein to bind calcium. Post-translationally, the iron and 2-oxoglutarate dependent 3-hydroxylation of aspartate and asparagine is (R) stereospecific within EGF domains. O-glycosylated. O-fucosylated by POFUT1 on a conserved serine or threonine residue found in the consensus sequence C2-X(4,5)-[S/T]-C3 of EGF domains, where C2 and C3 are the second and third conserved cysteines. In terms of processing, can be either O-glucosylated or O-xylosylated at Ser-112 by POGLUT1.

The protein localises to the secreted. It carries out the reaction Selective cleavage of Arg-|-Ile bond in factor X to form factor Xa.. Initiates the extrinsic pathway of blood coagulation. Serine protease that circulates in the blood in a zymogen form. Factor VII is converted to factor VIIa by factor Xa, factor XIIa, factor IXa, or thrombin by minor proteolysis. In the presence of tissue factor and calcium ions, factor VIIa then converts factor X to factor Xa by limited proteolysis. Factor VIIa also converts factor IX to factor IXa in the presence of tissue factor and calcium. The protein is Coagulation factor VII (F7) of Pan paniscus (Pygmy chimpanzee).